The following is a 419-amino-acid chain: NF-kappa-B essential modulator (419 aa).

A required for interaction with and ubiquitination by MARCHF2 region spans residues 1 to 197 (MNRHLWKSQL…REALQQQHSV (197 aa)). Ser31 and Ser43 each carry phosphoserine; by IKKB. Residues 44 to 111 (EQGAPETLQR…KLVERLGLEK (68 aa)) are interaction with CHUK/IKBKB. Positions 49-356 (ETLQRCLEEN…CQESARIEDM (308 aa)) form a coiled coil. Ser68 bears the Phosphoserine mark. At Ser85 the chain carries Phosphoserine; by ATM. Glycyl lysine isopeptide (Lys-Gly) (interchain with G-Cter in ubiquitin) cross-links involve residues Lys111, Lys139, Lys143, Lys226, Lys246, and Lys264. The interaction with TANK stretch occupies residues 150 to 257 (LGELQESQSR…SVVGSERKRG (108 aa)). A ubiquitin-binding (UBAN) region spans residues 242–350 (DNHIKSSVVG…SKLKASCQES (109 aa)). A self-association region spans residues 246 to 365 (KSSVVGSERK…MRKRHVEVSQ (120 aa)). A required for interaction with TNFAIP3 region spans residues 251–419 (GSERKRGMQL…LQIHVMECIE (169 aa)). Lys277 participates in a covalent cross-link: Glycyl lysine isopeptide (Lys-Gly) (interchain with G-Cter in SUMO); alternate. Residue Lys277 forms a Glycyl lysine isopeptide (Lys-Gly) (interchain with G-Cter in ubiquitin); alternate linkage. Residues Lys283, Lys285, Lys292, and Lys302 each participate in a glycyl lysine isopeptide (Lys-Gly) (interchain with G-Cter in ubiquitin) cross-link. Residue Lys309 forms a Glycyl lysine isopeptide (Lys-Gly) (interchain with G-Cter in SUMO); alternate linkage. A Glycyl lysine isopeptide (Lys-Gly) (interchain with G-Cter in ubiquitin); alternate cross-link involves residue Lys309. Residues Lys321 and Lys325 each participate in a glycyl lysine isopeptide (Lys-Gly) (interchain with G-Cter in ubiquitin) cross-link. Residues 322-343 (LAEKKELLQEQLEQLQREYSKL) are leucine-zipper. Lys326 is covalently cross-linked (Glycyl lysine isopeptide (Lys-Gly) (interchain with G-Cter in ubiquitin and interchain with MARCHF2)). Residues 358–395 (KRHVEVSQAPLPPAPAYLSSPLALPSQRRSPPEEPPDF) are disordered. The segment covering 373 to 386 (AYLSSPLALPSQRR) has biased composition (low complexity). Residue Ser376 is modified to Phosphoserine; by IKKB. The interaction with CYLD stretch occupies residues 382–419 (PSQRRSPPEEPPDFCCPKCQYQAPDMDTLQIHVMECIE). Ser387 carries the post-translational modification Phosphoserine. Residues 389-419 (PEEPPDFCCPKCQYQAPDMDTLQIHVMECIE) form a CCHC NOA-type zinc finger. Cys397 contributes to the Zn(2+) binding site. Lys399 is covalently cross-linked (Glycyl lysine isopeptide (Lys-Gly) (interchain with G-Cter in ubiquitin)). The Zn(2+) site is built by Cys400, His413, and Cys417.

Homodimer; disulfide-linked. Component of the I-kappa-B-kinase (IKK) core complex consisting of CHUK, IKBKB and IKBKG; probably four alpha/CHUK-beta/IKBKB dimers are associated with four gamma/IKBKG subunits. The IKK core complex seems to associate with regulatory or adapter proteins to form a IKK-signalosome holo-complex. The IKK complex associates with TERF2IP/RAP1, leading to promote IKK-mediated phosphorylation of RELA/p65. Part of a complex composed of NCOA2, NCOA3, CHUK/IKKA, IKBKB, IKBKG and CREBBP. Interacts with COPS3, CYLD, NALP2, TRPC4AP and PIDD1. Interacts with ATM; the complex is exported from the nucleus. Interacts with TRAF6. Interacts with IKBKE. Interacts with TANK; the interaction is enhanced by IKBKE and TBK1. Part of a ternary complex consisting of TANK, IKBKB and IKBKG. Interacts with ZFAND5. Interacts with RIPK2. Interacts with TNIP1 and TNFAIP3; TNIP1 facilitates the TNFAIP3-mediated de-ubiquitination of IKBKG. Interacts with TNFAIP3; the interaction is induced by TNF stimulation and by polyubiquitin. Binds (via UBAN region) polyubiquitin; binds both 'Lys-63'-linked and linear polyubiquitin, with higher affinity for linear ubiquitin. Interacts with NLRP10. Interacts with TANK; this interaction increases in response to DNA damage. Interacts with USP10; this interaction increases in response to DNA damage. Interacts with ZC3H12A; this interaction increases in response to DNA damage. Interacts with IFIT5; the interaction synergizes the recruitment of IKK to MAP3K7 and enhances IKK phosphorylation. Interacts with TRIM29; this interaction induces IKBKG/NEMO ubiquitination and proteolytic degradation. Interacts with TRIM13; this interaction leads to IKBKG/NEMO ubiquitination. Interacts with ARFIP2. Interacts with RIPK1. Interacts with (ubiquitinated) BCL10; interaction with polyubiquitinated BCL10 via both 'Lys-63'-linked and linear ubiquitin is required for TCR-induced NF-kappa-B activation. Interacts with MARCHF2; during the late stages of macrophage viral and bacterial infection; the interaction leads to ubiquitination and degradation of IKBKG/NEMO. In terms of assembly, (Microbial infection) Interacts with Molluscum contagiosum virus protein MC005; this interaction inhibits NF-kappa-B activation. As to quaternary structure, (Microbial infection) Interacts with HTLV-1 Tax oncoprotein; the interaction activates IKBKG. (Microbial infection) Interacts with Shigella flexneri ipah9.8; the interaction promotes TNIP1-dependent 'Lys-27'-linked polyubiquitination of IKBKG which perturbs NF-kappa-B activation during bacterial infection. In terms of assembly, (Microbial infection) Interacts with SARS coronavirus-2/SARS-CoV-2 virus protein ORF9B (via N-terminus); the interaction inhibits polyubiquitination through 'Lys-63' and NF-kappa-B activation. Phosphorylation at Ser-68 attenuates aminoterminal homodimerization. Post-translationally, polyubiquitinated on Lys-285 via 'Lys-63'-linked ubiquitin; the ubiquitination is mediated downstream of NOD2 and RIPK2 and probably plays a role in signaling by facilitating interactions with ubiquitin domain-containing proteins and activates the NF-kappa-B pathway. Polyubiquitinated on Lys-285 and Lys-399 through 'Lys-63'-linked ubiquitin; the ubiquitination is mediated by BCL10, MALT1 and TRAF6 and probably plays a role in signaling by facilitating interactions with ubiquitin domain-containing proteins and activates the NF-kappa-B pathway. Monoubiquitinated on Lys-277 and Lys-309; promotes nuclear export. Polyubiquitinated through 'Lys-27' by TRIM23; involved in antiviral innate and inflammatory responses. Linear polyubiquitinated on Lys-111, Lys-143, Lys-226, Lys-246, Lys-264, Lys-277, Lys-285, Lys-292, Lys-302, Lys-309 and Lys-326; the head-to-tail polyubiquitination is mediated by the LUBAC complex and plays a key role in NF-kappa-B activation. Deubiquitinated by USP10 in a TANK-dependent and -independent manner, leading to the negative regulation of NF-kappa-B signaling upon DNA damage. Ubiquitinated at Lys-326 by MARCHF2 following bacterial and viral infection which leads to its degradation. Polyubiquitinated via 'Lys-29'-linked ubiquitin; leading to lysosomal degradation. In terms of processing, sumoylated on Lys-277 and Lys-309 with SUMO1; the modification results in phosphorylation of Ser-85 by ATM leading to a replacement of the sumoylation by mono-ubiquitination on these residues. Neddylated by TRIM40, resulting in stabilization of NFKBIA and down-regulation of NF-kappa-B activity. Post-translationally, (Microbial infection) Cleaved by hepatitis A virus (HAV) protease 3C allowing the virus to disrupt the host innate immune signaling. In terms of processing, (Microbial infection) Deubiquitinated by Epstein-Barr virus BPLF1 on both 'Lys-48' and 'Lys-63'-linked ubiquitin chains; leading to NF-kappa-B signaling inhibition. (Microbial infection) Polyubiquitinated on Lys-309 and Lys-321 via 'Lys-27'-linked ubiquitin by Shigella flexneri E3 ubiquitin-protein ligase ipah9.8, leading to its degradation by the proteasome. Post-translationally, (Microbial infection) Polyubiquitination through 'Lys-63' is interrupted by interaction with SARS coronavirus-2/SARS-CoV-2 virus protein ORF9B which inhibits the NF-kappa-B pathway. In terms of tissue distribution, heart, brain, placenta, lung, liver, skeletal muscle, kidney and pancreas.

The protein localises to the cytoplasm. It localises to the nucleus. Its function is as follows. Regulatory subunit of the IKK core complex which phosphorylates inhibitors of NF-kappa-B thus leading to the dissociation of the inhibitor/NF-kappa-B complex and ultimately the degradation of the inhibitor. Its binding to scaffolding polyubiquitin plays a key role in IKK activation by multiple signaling receptor pathways. Can recognize and bind both 'Lys-63'-linked and linear polyubiquitin upon cell stimulation, with a much higher affinity for linear polyubiquitin. Could be implicated in NF-kappa-B-mediated protection from cytokine toxicity. Essential for viral activation of IRF3. Involved in TLR3- and IFIH1-mediated antiviral innate response; this function requires 'Lys-27'-linked polyubiquitination. Functionally, (Microbial infection) Also considered to be a mediator for HTLV-1 Tax oncoprotein activation of NF-kappa-B. The protein is NF-kappa-B essential modulator of Homo sapiens (Human).